The primary structure comprises 551 residues: Glucose-6-phosphate isomerase (551 aa).

E356 acts as the Proton donor in catalysis. Residues H387 and K515 contribute to the active site.

The protein belongs to the GPI family.

Its subcellular location is the cytoplasm. It catalyses the reaction alpha-D-glucose 6-phosphate = beta-D-fructose 6-phosphate. It functions in the pathway carbohydrate biosynthesis; gluconeogenesis. The protein operates within carbohydrate degradation; glycolysis; D-glyceraldehyde 3-phosphate and glycerone phosphate from D-glucose: step 2/4. Catalyzes the reversible isomerization of glucose-6-phosphate to fructose-6-phosphate. In Blochmanniella pennsylvanica (strain BPEN), this protein is Glucose-6-phosphate isomerase.